The primary structure comprises 473 residues: Glycine receptor subunit beta-type 4 (473 aa).

A signal peptide spans 1 to 19; that stretch reads MHSLFLKILIYSLMQCVLG. The Extracellular portion of the chain corresponds to 20–249; sequence QAEFWDYDEN…EFHVDREITH (230 aa). Residues asparagine 29, asparagine 105, and asparagine 151 are each glycosylated (N-linked (GlcNAc...) asparagine). The cysteines at positions 166 and 180 are disulfide-linked. A helical membrane pass occupies residues 250 to 271; it reads HIIQSYIPTSLIVIISWFSFWL. The Cytoplasmic segment spans residues 272–276; it reads DVEAV. The chain crosses the membrane as a helical span at residues 277–297; it reads PGRVSLSITTLLTLATQSSAA. Topologically, residues 298 to 308 are extracellular; it reads RMALPQASDVK. Residues 309-329 traverse the membrane as a helical segment; sequence AIDVWMGTCMAFVFSAMIEFT. Over 330–439 the chain is Cytoplasmic; the sequence is VVNYCVRRKV…NRKNAQKIDR (110 aa). Residues 440–460 traverse the membrane as a helical segment; that stretch reads YSRALFPLAFIIFNIFYWIYY. The Extracellular portion of the chain corresponds to 461-473; that stretch reads LKYAGSNSPELLL.

This sequence belongs to the ligand-gated ion channel (TC 1.A.9) family. Glycine receptor (TC 1.A.9.3) subfamily. In terms of assembly, pentamer.

It localises to the postsynaptic cell membrane. It is found in the synapse. Its subcellular location is the cell membrane. Glycine receptors are ligand-gated chloride channels. Channel opening is triggered by extracellular glycine. Contributes to the generation of inhibitory postsynaptic currents. In Caenorhabditis elegans, this protein is Glycine receptor subunit beta-type 4.